The primary structure comprises 576 residues: 9-cis-epoxycarotenoid dioxygenase NCED2, chloroplastic (576 aa).

The transit peptide at 1-34 (MEVPIAAMTFAHPANVMTLASRQPKSKRSHISPA) directs the protein to the chloroplast. Residues His-270, His-319, His-385, and His-563 each contribute to the Fe cation site.

It belongs to the carotenoid oxygenase family. Fe(2+) is required as a cofactor.

The protein resides in the plastid. Its subcellular location is the chloroplast. It carries out the reaction a 9-cis-epoxycarotenoid + O2 = a 12'-apo-carotenal + 2-cis,4-trans-xanthoxin. It catalyses the reaction 9-cis-violaxanthin + O2 = (3S,5R,6S)-5,6-epoxy-3-hydroxy-5,6-dihydro-12'-apo-beta-caroten-12'-al + 2-cis,4-trans-xanthoxin. The enzyme catalyses 9'-cis-neoxanthin + O2 = (3S,5R,6R)-3,5-dihydroxy-6,7-didehydro-5,6-dihydro-12'-apo-beta-caroten-12'-al + 2-cis,4-trans-xanthoxin. Has a 11,12(11',12') 9-cis epoxycarotenoid cleavage activity. Catalyzes the first step of abscisic-acid biosynthesis from carotenoids. The protein is 9-cis-epoxycarotenoid dioxygenase NCED2, chloroplastic of Oryza sativa subsp. japonica (Rice).